Here is a 151-residue protein sequence, read N- to C-terminus: MKITSPHFGEIEVNEDKIITFPTGLIGFSDCKRYLLLEGEQGTPFWYLQSVEQEDLFFVMIDPTNFFEDYQIEPSSQDLAAIDLKESENAVILTLVTVPEQDIKSATVNLKGPVIINPDRRLGKQIVLHPSDYTTKHPLFNDQGTKARGAV.

It belongs to the FliW family. As to quaternary structure, interacts with translational regulator CsrA and flagellin(s).

Its subcellular location is the cytoplasm. Its function is as follows. Acts as an anti-CsrA protein, binds CsrA and prevents it from repressing translation of its target genes, one of which is flagellin. Binds to flagellin and participates in the assembly of the flagellum. The polypeptide is Flagellar assembly factor FliW (Natranaerobius thermophilus (strain ATCC BAA-1301 / DSM 18059 / JW/NM-WN-LF)).